We begin with the raw amino-acid sequence, 263 residues long: Endonuclease 8 (263 aa).

Catalysis depends on Pro-2, which acts as the Schiff-base intermediate with DNA. Glu-3 acts as the Proton donor in catalysis. The Proton donor; for beta-elimination activity role is filled by Lys-53. The DNA site is built by Gln-70, Arg-125, and Asn-169. An FPG-type zinc finger spans residues 229–263 (KVFHRDGEACERCGGIIEKTTLSSRPFYWCPHCQK). Arg-253 (proton donor; for delta-elimination activity) is an active-site residue.

The protein belongs to the FPG family. The cofactor is Zn(2+).

The catalysed reaction is 2'-deoxyribonucleotide-(2'-deoxyribose 5'-phosphate)-2'-deoxyribonucleotide-DNA = a 3'-end 2'-deoxyribonucleotide-(2,3-dehydro-2,3-deoxyribose 5'-phosphate)-DNA + a 5'-end 5'-phospho-2'-deoxyribonucleoside-DNA + H(+). Its function is as follows. Involved in base excision repair of DNA damaged by oxidation or by mutagenic agents. Acts as a DNA glycosylase that recognizes and removes damaged bases. Has a preference for oxidized pyrimidines, such as thymine glycol, 5,6-dihydrouracil and 5,6-dihydrothymine. Has AP (apurinic/apyrimidinic) lyase activity and introduces nicks in the DNA strand. Cleaves the DNA backbone by beta-delta elimination to generate a single-strand break at the site of the removed base with both 3'- and 5'-phosphates. The chain is Endonuclease 8 from Salmonella enteritidis PT4 (strain P125109).